Reading from the N-terminus, the 473-residue chain is Bifunctional protein HldE (473 aa).

Residues Met-1 to Ser-317 are ribokinase. Asn-194–Glu-197 lines the ATP pocket. Residue Asp-263 is part of the active site. Residues Phe-343 to Arg-473 are cytidylyltransferase.

It in the N-terminal section; belongs to the carbohydrate kinase PfkB family. The protein in the C-terminal section; belongs to the cytidylyltransferase family. As to quaternary structure, homodimer.

It catalyses the reaction D-glycero-beta-D-manno-heptose 7-phosphate + ATP = D-glycero-beta-D-manno-heptose 1,7-bisphosphate + ADP + H(+). The catalysed reaction is D-glycero-beta-D-manno-heptose 1-phosphate + ATP + H(+) = ADP-D-glycero-beta-D-manno-heptose + diphosphate. It participates in nucleotide-sugar biosynthesis; ADP-L-glycero-beta-D-manno-heptose biosynthesis; ADP-L-glycero-beta-D-manno-heptose from D-glycero-beta-D-manno-heptose 7-phosphate: step 1/4. The protein operates within nucleotide-sugar biosynthesis; ADP-L-glycero-beta-D-manno-heptose biosynthesis; ADP-L-glycero-beta-D-manno-heptose from D-glycero-beta-D-manno-heptose 7-phosphate: step 3/4. Functionally, catalyzes the phosphorylation of D-glycero-D-manno-heptose 7-phosphate at the C-1 position to selectively form D-glycero-beta-D-manno-heptose-1,7-bisphosphate. Catalyzes the ADP transfer from ATP to D-glycero-beta-D-manno-heptose 1-phosphate, yielding ADP-D-glycero-beta-D-manno-heptose. This Pseudomonas aeruginosa (strain LESB58) protein is Bifunctional protein HldE.